The following is a 231-amino-acid chain: Ribose-5-phosphate isomerase A (231 aa).

Substrate is bound by residues 23–26, 80–83, and 93–96; these read SGST, DGAD, and KGGG. Glu-102 acts as the Proton acceptor in catalysis. Lys-120 serves as a coordination point for substrate.

It belongs to the ribose 5-phosphate isomerase family. Homodimer.

It catalyses the reaction aldehydo-D-ribose 5-phosphate = D-ribulose 5-phosphate. It functions in the pathway carbohydrate degradation; pentose phosphate pathway; D-ribose 5-phosphate from D-ribulose 5-phosphate (non-oxidative stage): step 1/1. Functionally, catalyzes the reversible conversion of ribose-5-phosphate to ribulose 5-phosphate. The sequence is that of Ribose-5-phosphate isomerase A from Prochlorococcus marinus subsp. pastoris (strain CCMP1986 / NIES-2087 / MED4).